A 374-amino-acid chain; its full sequence is DNA integrity scanning protein DisA (374 aa).

Residues 20-158 enclose the DAC domain; sequence DGLMRASLSA…DGQRRVLEDS (139 aa). ATP-binding positions include G87, L105, and 118-122; that span reads TRHRT.

The protein belongs to the DisA family. Homooctamer. Interacts with RadA. Mg(2+) is required as a cofactor.

The enzyme catalyses 2 ATP = 3',3'-c-di-AMP + 2 diphosphate. Diadenylate cyclase activity is inhibited by the interaction with RadA. In terms of biological role, participates in a DNA-damage check-point that is active prior to asymmetric division when DNA is damaged. DisA forms globular foci that rapidly scan along the chromosomes during sporulation, searching for lesions. When a lesion is present, DisA pauses at the lesion site. This triggers a cellular response that culminates in a temporary block in sporulation initiation. Functionally, also has diadenylate cyclase activity, catalyzing the condensation of 2 ATP molecules into cyclic di-AMP (c-di-AMP). c-di-AMP acts as a signaling molecule that couples DNA integrity with progression of sporulation. The rise in c-di-AMP level generated by DisA while scanning the chromosome, operates as a positive signal that advances sporulation; upon encountering a lesion, the DisA focus arrests at the damaged site and halts c-di-AMP synthesis. The chain is DNA integrity scanning protein DisA from Streptomyces coelicolor (strain ATCC BAA-471 / A3(2) / M145).